We begin with the raw amino-acid sequence, 355 residues long: Biotin synthase (355 aa).

Residues 51-275 (NTVKVNYLVN…VCPDKEIRIA (225 aa)) enclose the Radical SAM core domain. [4Fe-4S] cluster-binding residues include C66, C70, and C73. C110, C143, C203, and R273 together coordinate [2Fe-2S] cluster.

The protein belongs to the radical SAM superfamily. Biotin synthase family. As to quaternary structure, homodimer. Requires [4Fe-4S] cluster as cofactor. The cofactor is [2Fe-2S] cluster.

The catalysed reaction is (4R,5S)-dethiobiotin + (sulfur carrier)-SH + 2 reduced [2Fe-2S]-[ferredoxin] + 2 S-adenosyl-L-methionine = (sulfur carrier)-H + biotin + 2 5'-deoxyadenosine + 2 L-methionine + 2 oxidized [2Fe-2S]-[ferredoxin]. Its pathway is cofactor biosynthesis; biotin biosynthesis; biotin from 7,8-diaminononanoate: step 2/2. Functionally, catalyzes the conversion of dethiobiotin (DTB) to biotin by the insertion of a sulfur atom into dethiobiotin via a radical-based mechanism. This is Biotin synthase from Saccharopolyspora erythraea (strain ATCC 11635 / DSM 40517 / JCM 4748 / NBRC 13426 / NCIMB 8594 / NRRL 2338).